Reading from the N-terminus, the 876-residue chain is Paramyosin (876 aa).

The tract at residues 1–28 is nonhelical region; the sequence is MSARSAKFMYRSGNAGASGDLSVEYGTD. Residues 29–855 adopt a coiled-coil conformation; that stretch reads LGALTRLEDK…IRAKHRSWVT (827 aa). The interval 856-876 is nonhelical region; the sequence is TSQVPGGTRQVFVTQEEQSNY.

The protein belongs to the paramyosin family. Homodimer.

The protein localises to the cytoplasm. It localises to the myofibril. Paramyosin is a major structural component of many thick filaments isolated from invertebrate muscles. In Sarcoptes scabiei (Itch mite), this protein is Paramyosin.